The sequence spans 151 residues: MRVWIDADACPRAAKDQVVKFALKRQFEVVLVAGQSQIKPSFSCVKLIVVPSGPDAADDYLVEHAVPGELVICSDVPLADRLVKNGVTALDPRGKEFSPANMSERLAVRNLFTDLREQGQMGGGPPPHGEKEKQAFANALDRILTRLMRQA.

This sequence belongs to the UPF0178 family.

In Pseudomonas fluorescens (strain SBW25), this protein is UPF0178 protein PFLU_5917.